Consider the following 188-residue polypeptide: Surfactant protein C (188 aa).

The propeptide occupies M1–R23. S-palmitoyl cysteine attachment occurs at residues C28 and C29. The propeptide occupies H59–I188. Residues F94–I188 form the BRICHOS domain. Cysteines 121 and 180 form a disulfide. The interval N144 to S164 is disordered.

The protein localises to the secreted. It is found in the extracellular space. It localises to the surface film. In terms of biological role, pulmonary surfactant associated proteins promote alveolar stability by lowering the surface tension at the air-liquid interface in the peripheral air spaces. The chain is Surfactant protein C (SFTPC) from Oryctolagus cuniculus (Rabbit).